The sequence spans 397 residues: Protochlorophyllide reductase, chloroplastic (397 aa).

Residues 1-57 constitute a chloroplast transit peptide; it reads MALTMSAKSVSARAQVSSKAQAAPAVAVSGRTSSRVMPAPALAARSSVARTPLVVCA.

The protein belongs to the short-chain dehydrogenases/reductases (SDR) family. POR subfamily.

The protein localises to the plastid. The protein resides in the chloroplast. The enzyme catalyses chlorophyllide a + NADP(+) = protochlorophyllide a + NADPH + H(+). Its pathway is porphyrin-containing compound metabolism; chlorophyll biosynthesis. Phototransformation of protochlorophyllide (Pchlide) to chlorophyllide (Chlide). This is Protochlorophyllide reductase, chloroplastic (PORA) from Chlamydomonas reinhardtii (Chlamydomonas smithii).